The following is a 206-amino-acid chain: Dephospho-CoA kinase (206 aa).

Residues 4-200 (IVALTGGIGS…HRYLKLATAA (197 aa)) enclose the DPCK domain. 12-17 (GSGKST) is a binding site for ATP.

The protein belongs to the CoaE family.

The protein localises to the cytoplasm. It catalyses the reaction 3'-dephospho-CoA + ATP = ADP + CoA + H(+). It participates in cofactor biosynthesis; coenzyme A biosynthesis; CoA from (R)-pantothenate: step 5/5. Functionally, catalyzes the phosphorylation of the 3'-hydroxyl group of dephosphocoenzyme A to form coenzyme A. The protein is Dephospho-CoA kinase of Yersinia pestis.